The sequence spans 423 residues: Glycine amidinotransferase, mitochondrial (423 aa).

The transit peptide at 1–43 (MLRVRCLRGGSRGAEALHYIGSRLGRTVTGWVQRTFQSTQAAT) directs the protein to the mitochondrion. Residues Ser46 and Ser49 each carry the phosphoserine modification. Asp170 contacts arginine. Active-site residues include Asp254 and His303. Arginine contacts are provided by Asp305, Arg322, Ser354, and Ser355. At Lys385 the chain carries N6-acetyllysine. Cys407 (amidino-cysteine intermediate) is an active-site residue.

This sequence belongs to the amidinotransferase family. As to quaternary structure, homodimer. In terms of tissue distribution, kidney. Expressed biallelically in placenta.

It localises to the mitochondrion inner membrane. It catalyses the reaction L-arginine + glycine = guanidinoacetate + L-ornithine. The catalysed reaction is 4-aminobutanoate + L-arginine = 4-guanidinobutanoate + L-ornithine. It carries out the reaction beta-alanine + L-arginine = 3-guanidinopropanoate + L-ornithine. The enzyme catalyses taurine + L-arginine = taurocyamine + L-ornithine. It participates in amine and polyamine biosynthesis; creatine biosynthesis; creatine from L-arginine and glycine: step 1/2. In terms of biological role, transamidinase that catalyzes the transfer of the amidino group of L-arginine onto the amino moiety of acceptor metabolites such as glycine, beta-alanine, gamma-aminobutyric acid (GABA) and taurine yielding the corresponding guanidine derivatives. Catalyzes the rate-limiting step of creatine biosynthesis, namely the transfer of the amidino group from L-arginine to glycine to generate guanidinoacetate, which is then methylated by GAMT to form creatine. Provides creatine as a source for ATP generation in tissues with high energy demands, in particular skeletal muscle, heart and brain. The protein is Glycine amidinotransferase, mitochondrial (GATM) of Sus scrofa (Pig).